A 355-amino-acid chain; its full sequence is Peptide chain release factor 1 (355 aa).

Gln-233 carries the N5-methylglutamine modification.

It belongs to the prokaryotic/mitochondrial release factor family. In terms of processing, methylated by PrmC. Methylation increases the termination efficiency of RF1.

It localises to the cytoplasm. Its function is as follows. Peptide chain release factor 1 directs the termination of translation in response to the peptide chain termination codons UAG and UAA. The polypeptide is Peptide chain release factor 1 (Dehalococcoides mccartyi (strain ATCC BAA-2100 / JCM 16839 / KCTC 5957 / BAV1)).